The sequence spans 643 residues: 1-deoxy-D-xylulose-5-phosphate synthase (643 aa).

Thiamine diphosphate-binding positions include His-79 and 120 to 122; that span reads AHA. Residue Asp-151 coordinates Mg(2+). Thiamine diphosphate is bound by residues 152-153, Asn-180, Tyr-287, and Glu-369; that span reads GS. Asn-180 lines the Mg(2+) pocket.

The protein belongs to the transketolase family. DXPS subfamily. In terms of assembly, homodimer. Requires Mg(2+) as cofactor. The cofactor is thiamine diphosphate.

It catalyses the reaction D-glyceraldehyde 3-phosphate + pyruvate + H(+) = 1-deoxy-D-xylulose 5-phosphate + CO2. Its pathway is metabolic intermediate biosynthesis; 1-deoxy-D-xylulose 5-phosphate biosynthesis; 1-deoxy-D-xylulose 5-phosphate from D-glyceraldehyde 3-phosphate and pyruvate: step 1/1. In terms of biological role, catalyzes the acyloin condensation reaction between C atoms 2 and 3 of pyruvate and glyceraldehyde 3-phosphate to yield 1-deoxy-D-xylulose-5-phosphate (DXP). The chain is 1-deoxy-D-xylulose-5-phosphate synthase from Maricaulis maris (strain MCS10) (Caulobacter maris).